Consider the following 87-residue polypeptide: Conotoxin Ca6.2 (87 aa).

The first 19 residues, 1–19 (MHTLEMLLLVLLLVPLAPG), serve as a signal peptide directing secretion. Positions 20 to 52 (EGDGQAVGGDRNPSEARRAYKRLLQRPARRMDR) are excised as a propeptide. 3 disulfides stabilise this stretch: Cys55–Cys64, Cys58–Cys70, and Cys63–Cys84.

This sequence belongs to the conotoxin Q superfamily. Expressed by the venom duct.

Its subcellular location is the secreted. The polypeptide is Conotoxin Ca6.2 (Conus caracteristicus (Characteristic cone)).